Here is a 359-residue protein sequence, read N- to C-terminus: UDP-N-acetylglucosamine--N-acetylmuramyl-(pentapeptide) pyrophosphoryl-undecaprenol N-acetylglucosamine transferase (359 aa).

Residues 15–17 (TGG), Asn127, Arg166, Ser191, Ile245, 264–269 (ALTVSE), and Gln290 each bind UDP-N-acetyl-alpha-D-glucosamine.

This sequence belongs to the glycosyltransferase 28 family. MurG subfamily.

It localises to the cell inner membrane. It catalyses the reaction di-trans,octa-cis-undecaprenyl diphospho-N-acetyl-alpha-D-muramoyl-L-alanyl-D-glutamyl-meso-2,6-diaminopimeloyl-D-alanyl-D-alanine + UDP-N-acetyl-alpha-D-glucosamine = di-trans,octa-cis-undecaprenyl diphospho-[N-acetyl-alpha-D-glucosaminyl-(1-&gt;4)]-N-acetyl-alpha-D-muramoyl-L-alanyl-D-glutamyl-meso-2,6-diaminopimeloyl-D-alanyl-D-alanine + UDP + H(+). Its pathway is cell wall biogenesis; peptidoglycan biosynthesis. Cell wall formation. Catalyzes the transfer of a GlcNAc subunit on undecaprenyl-pyrophosphoryl-MurNAc-pentapeptide (lipid intermediate I) to form undecaprenyl-pyrophosphoryl-MurNAc-(pentapeptide)GlcNAc (lipid intermediate II). In Pseudomonas putida (strain W619), this protein is UDP-N-acetylglucosamine--N-acetylmuramyl-(pentapeptide) pyrophosphoryl-undecaprenol N-acetylglucosamine transferase.